The primary structure comprises 160 residues: Tumor suppressor ARF (160 aa).

Residues 1-63 are interaction with CDK5RAP3 and MDM2; it reads MGRRFVVTVR…RRGPQPHPGP (63 aa). Disordered stretches follow at residues 49–74 and 90–116; these read PERI…QSGS and HPLP…GRGA.

As to quaternary structure, does not interact with cyclins, CDK1, CDK2, CDK4, CDK5 or CDK6. Binds to BCL6, E2F1, HUWE1, MDM2, MYC, NPM1/B23, TOP1/TOPOI and UBE2I/UBC9. Interacts with TBRG1 and COMMD1. Interacts with CDKN2AIP and E4F1. Interacts with CDK5RAP3 and MDM2; form a ternary complex involved in regulation of p53/TP53. Interacts with NOP53; the interaction is direct and promotes ARF nucleoplasmic relocalization and ubiquitin-mediated proteasomal degradation. Interacts with TTF1 (via the N-terminal region (NRD) and a C-terminal region); the interaction is direct and inhibits the nucleolar localization of TTF1. In terms of processing, ubiquitinated in normal cells by TRIP12 via the ubiquitin fusion degradation (UFD) pathway, a process that mediates ubiquitination at the N-terminus, regardless of the absence of lysine residues. Ubiquitination leads to its proteasomal degradation. In cancer cells, however, TRIP12 is located in a different cell compartment, preventing ubiquitination and degradation. Widely expressed with very low levels in kidney and colon.

It is found in the nucleus. Its subcellular location is the nucleolus. It localises to the nucleoplasm. Capable of inducing cell cycle arrest in G1 and G2 phases. Acts as a tumor suppressor. Binds to MDM2 and blocks its nucleocytoplasmic shuttling by sequestering it in the nucleolus. This inhibits the oncogenic action of MDM2 by blocking MDM2-induced degradation of p53 and enhancing p53-dependent transactivation and apoptosis. Also induces G2 arrest and apoptosis in a p53-independent manner by preventing the activation of cyclin B1/CDC2 complexes. Binds to BCL6 and down-regulates BCL6-induced transcriptional repression. Binds to E2F1 and MYC and blocks their transcriptional activator activity but has no effect on MYC transcriptional repression. Binds to TOP1/TOPOI and stimulates its activity. This complex binds to rRNA gene promoters and may play a role in rRNA transcription and/or maturation. Interacts with NPM1/B23 and promotes its polyubiquitination and degradation, thus inhibiting rRNA processing. Plays a role in inhibiting ribosome biogenesis, perhaps by binding to the nucleolar localization sequence of transcription termination factor TTF1, and thereby preventing nucleolar localization of TTF1. Interacts with COMMD1 and promotes its 'Lys63'-linked polyubiquitination. Interacts with UBE2I/UBC9 and enhances sumoylation of a number of its binding partners including MDM2 and E2F1. Binds to HUWE1 and represses its ubiquitin ligase activity. May play a role in controlling cell proliferation and apoptosis during mammary gland development. The chain is Tumor suppressor ARF from Rattus norvegicus (Rat).